Consider the following 383-residue polypeptide: GA-binding protein subunit beta-1 (383 aa).

Ser2 is subject to N-acetylserine. 2 ANK repeats span residues 5 to 34 (DLGK…PFTT) and 37 to 66 (LGTS…SRDA). N6-acetyllysine is present on Lys69. ANK repeat units lie at residues 70–99 (VDRT…DVNA), 103–132 (LKMT…DVHT), and 136–166 (FCKT…QINT). An N6-acetyllysine mark is found at Lys340 and Lys369.

As to quaternary structure, heterotetramer of two alpha and two beta subunits. Interacts with HCFC1, causing repression of transcriptional activity. Acetylated by EP300/p300. Deacetylated by SIRT7, promoting heterotetramerization and activity.

Its subcellular location is the nucleus. Functionally, transcription factor capable of interacting with purine rich repeats (GA repeats). Acts as a master regulator of nuclear-encoded mitochondrial genes. The protein is GA-binding protein subunit beta-1 (GABPB1) of Bos taurus (Bovine).